A 626-amino-acid polypeptide reads, in one-letter code: MIIFKKKAILKVLLLVPVFWICSLIFFAATSNDSSQIGSNNDLANKIAEANFHPKAAKQDVIQGFGPPIEPEPVVENNKVEEEEQPGGNLAKPKFMVDPNDPIYKKGDAAQAGELGKAVVVDKTKLSTEEKAKYDKGMLNNAFNQYASDMISVHRTLPTNIDAECKTEKYNENLPRTSVIICFHNEAWSVLLRTVHSVLERTPDHLLEEVVLVDDFSDMDHTKRPLEEYMSQFGGKVKILRMEKREGLIRARLRGAAVATGEVLTYLDSHCECMEGWMEPLLDRIKRDPTTVVCPVIDVIDDNTFEYHHSKAYFTSVGGFDWGLQFNWHSIPERDRKNRTRPIDPVRSPTMAGGLFSIDKKYFEKLGTYDPGFDIWGGENLELSFKIWMCGGTLEIVPCSHVGHVFRKRSPYKWRTGVNVLKRNSIRLAEVWLDDYKTYYYERINNQLGDFGDISSRKKLREDLGCKSFKWYLDNIYPELFVPGESVAKGEVRNSAVQPARCLDCMVGRHEKNRPVGTYQCHGQGGNQYWMLSKDGEIRRDESCVDYAGSDVMVFPCHGMKGNQEWRYNHDTGRLQHAVSQKCLGMTKDGAKLEMVACQYDDPYQHWKFKEYNEAKAIEHGAKPPS.

Over 1 to 11 (MIIFKKKAILK) the chain is Cytoplasmic. A helical; Signal-anchor for type II membrane protein transmembrane segment spans residues 12–31 (VLLLVPVFWICSLIFFAATS). Asparagine 32 carries an N-linked (GlcNAc...) asparagine glycan. Topologically, residues 32–626 (NDSSQIGSNN…AIEHGAKPPS (595 aa)) are lumenal. 5 disulfide bridges follow: cysteine 165–cysteine 399, cysteine 390–cysteine 466, cysteine 502–cysteine 521, cysteine 544–cysteine 557, and cysteine 583–cysteine 598. The catalytic subdomain A stretch occupies residues 174 to 284 (LPRTSVIICF…EGWMEPLLDR (111 aa)). Substrate contacts are provided by aspartate 215 and arginine 245. Position 268 (aspartate 268) interacts with Mn(2+). Serine 269 contacts substrate. Position 270 (histidine 270) interacts with Mn(2+). N-linked (GlcNAc...) asparagine glycosylation is present at asparagine 338. The tract at residues 345-407 (PVRSPTMAGG…PCSHVGHVFR (63 aa)) is catalytic subdomain B. Residue tryptophan 376 coordinates substrate. Histidine 404 contributes to the Mn(2+) binding site. Residues arginine 407 and tyrosine 412 each contribute to the substrate site. Residues 488–610 (AKGEVRNSAV…DDPYQHWKFK (123 aa)) form the Ricin B-type lectin domain.

It belongs to the glycosyltransferase 2 family. GalNAc-T subfamily. Mn(2+) is required as a cofactor.

It is found in the golgi apparatus membrane. It carries out the reaction L-seryl-[protein] + UDP-N-acetyl-alpha-D-galactosamine = a 3-O-[N-acetyl-alpha-D-galactosaminyl]-L-seryl-[protein] + UDP + H(+). It catalyses the reaction L-threonyl-[protein] + UDP-N-acetyl-alpha-D-galactosamine = a 3-O-[N-acetyl-alpha-D-galactosaminyl]-L-threonyl-[protein] + UDP + H(+). It functions in the pathway protein modification; protein glycosylation. Catalyzes the initial reaction in O-linked oligosaccharide biosynthesis, the transfer of an N-acetyl-D-galactosamine residue to a serine or threonine residue on the protein receptor. In Caenorhabditis elegans, this protein is Polypeptide N-acetylgalactosaminyltransferase 5 (gly-5).